A 339-amino-acid polypeptide reads, in one-letter code: Leucine-rich repeat-containing protein 75A (339 aa).

A disordered region spans residues 1 to 25; that stretch reads MGTRQTKGSLAERASPGAAPGPRRE. Positions 11 to 21 are enriched in low complexity; sequence AERASPGAAPG. LRR repeat units follow at residues 203 to 216 and 228 to 241; these read VDSV…LTDD and LPRL…GNRL. The segment at 294-339 is disordered; it reads LPTILELGEGPGTGEEAREGTDQQDPIGSPVTPARGQESTECVIQT. Phosphoserine is present on Ser322. Residue Thr325 is modified to Phosphothreonine. The segment covering 330–339 has biased composition (polar residues); it reads QESTECVIQT.

It belongs to the LRRC75 family.

This is Leucine-rich repeat-containing protein 75A (Lrrc75a) from Mus musculus (Mouse).